Here is a 382-residue protein sequence, read N- to C-terminus: Beta-lactamase CMY-1 (382 aa).

A signal peptide spans 1–23 (MQQRQSILWGAVATLMWAGLAHA). Serine 88 acts as the Acyl-ester intermediate in catalysis. A beta-lactam contacts are provided by serine 88, glutamine 144, tyrosine 174, asparagine 176, and asparagine 363.

It belongs to the class-C beta-lactamase family.

The catalysed reaction is a beta-lactam + H2O = a substituted beta-amino acid. Its activity is regulated as follows. Inhibited by the beta-lactamase-blocking agent sulbactam. Class C beta-lactamase which confers resistance to penicillins and cephalosporins. Has benzylpenicillin- and cefalotin-hydrolyzing activities. Has weak cefuroxime, cefotaxime, cefoxitin, imipenem and oxacillin-hydrolyzing activities. This Klebsiella pneumoniae protein is Beta-lactamase CMY-1.